Here is a 199-residue protein sequence, read N- to C-terminus: ATP-dependent Clp protease proteolytic subunit 2 (199 aa).

The Nucleophile role is filled by Ser-98. Residue His-123 is part of the active site.

The protein belongs to the peptidase S14 family. Fourteen ClpP subunits assemble into 2 heptameric rings which stack back to back to give a disk-like structure with a central cavity, resembling the structure of eukaryotic proteasomes.

Its subcellular location is the cytoplasm. The enzyme catalyses Hydrolysis of proteins to small peptides in the presence of ATP and magnesium. alpha-casein is the usual test substrate. In the absence of ATP, only oligopeptides shorter than five residues are hydrolyzed (such as succinyl-Leu-Tyr-|-NHMec, and Leu-Tyr-Leu-|-Tyr-Trp, in which cleavage of the -Tyr-|-Leu- and -Tyr-|-Trp bonds also occurs).. Cleaves peptides in various proteins in a process that requires ATP hydrolysis. Has a chymotrypsin-like activity. Plays a major role in the degradation of misfolded proteins. This Corynebacterium diphtheriae (strain ATCC 700971 / NCTC 13129 / Biotype gravis) protein is ATP-dependent Clp protease proteolytic subunit 2.